The sequence spans 216 residues: MENQLLVRRLGRQDYTPVWQAMHQFTDQRDSTTRDEVWLVEHNPVFTQGQAGKAEHLLNTGDIPVVQSDRGGQVTYHGPGQLVAYFLIDLRRKKLGVRELVTHIENLVIHTLKHYQIESAARPDAPGVYVKNRKICSLGLRIRKGCSFHGLALNIQMDLAPFLRINPCGYAGMEMIQVSDLHPVSMEQVEKVLIQELVTLLDYEQVEFSTEAYNHE.

The BPL/LPL catalytic domain maps to S31 to Q205. Residues R70 to H77, S137 to G139, and G150 to A152 contribute to the substrate site. C168 (acyl-thioester intermediate) is an active-site residue.

It belongs to the LipB family.

It localises to the cytoplasm. The enzyme catalyses octanoyl-[ACP] + L-lysyl-[protein] = N(6)-octanoyl-L-lysyl-[protein] + holo-[ACP] + H(+). Its pathway is protein modification; protein lipoylation via endogenous pathway; protein N(6)-(lipoyl)lysine from octanoyl-[acyl-carrier-protein]: step 1/2. Functionally, catalyzes the transfer of endogenously produced octanoic acid from octanoyl-acyl-carrier-protein onto the lipoyl domains of lipoate-dependent enzymes. Lipoyl-ACP can also act as a substrate although octanoyl-ACP is likely to be the physiological substrate. This is Octanoyltransferase from Vibrio cholerae serotype O1 (strain ATCC 39315 / El Tor Inaba N16961).